Reading from the N-terminus, the 70-residue chain is U2-agatoxin-Ao1b (70 aa).

Residues 1-20 (MRAIISLILISAMVFSMIAA) form the signal peptide. A propeptide spanning residues 21-34 (VPEEEGLQLSEDER) is cleaved from the precursor. 3 cysteine pairs are disulfide-bonded: C37–C53, C44–C58, and C52–C68. L69 is subject to Leucine amide.

Belongs to the neurotoxin 01 (U2-agtx) family. Expressed by the venom gland.

It is found in the secreted. Its function is as follows. Insect active toxin causing rapid but reversible paralysis in crickets. No activity shown in mammals. Does not show effect on mammalian voltage-gated calcium channels. This Agelena orientalis (Funnel-web spider) protein is U2-agatoxin-Ao1b.